The chain runs to 227 residues: Cytochrome c oxidase subunit 2 (227 aa).

The Mitochondrial intermembrane portion of the chain corresponds to 1 to 14 (MAYPFQLGLQDATS). Residues 15–45 (PIMEELLHFHDHTLMIVFLISSLVLYIITLM) form a helical membrane-spanning segment. The Mitochondrial matrix portion of the chain corresponds to 46–59 (LTTKLTHTSTMDAQ). The chain crosses the membrane as a helical span at residues 60–87 (EVETVWTILPAIILILIALPSLRILYMM). Residues 88–227 (DEINNPSLTV…YFETWSALMV (140 aa)) are Mitochondrial intermembrane-facing. Positions 161, 196, 198, 200, 204, and 207 each coordinate Cu cation. E198 lines the Mg(2+) pocket. Y218 carries the phosphotyrosine modification.

The protein belongs to the cytochrome c oxidase subunit 2 family. Component of the cytochrome c oxidase (complex IV, CIV), a multisubunit enzyme composed of 14 subunits. The complex is composed of a catalytic core of 3 subunits MT-CO1, MT-CO2 and MT-CO3, encoded in the mitochondrial DNA, and 11 supernumerary subunits COX4I, COX5A, COX5B, COX6A, COX6B, COX6C, COX7A, COX7B, COX7C, COX8 and NDUFA4, which are encoded in the nuclear genome. The complex exists as a monomer or a dimer and forms supercomplexes (SCs) in the inner mitochondrial membrane with NADH-ubiquinone oxidoreductase (complex I, CI) and ubiquinol-cytochrome c oxidoreductase (cytochrome b-c1 complex, complex III, CIII), resulting in different assemblies (supercomplex SCI(1)III(2)IV(1) and megacomplex MCI(2)III(2)IV(2)). Found in a complex with TMEM177, COA6, COX18, COX20, SCO1 and SCO2. Interacts with TMEM177 in a COX20-dependent manner. Interacts with COX20. Interacts with COX16. The cofactor is Cu cation.

The protein resides in the mitochondrion inner membrane. It carries out the reaction 4 Fe(II)-[cytochrome c] + O2 + 8 H(+)(in) = 4 Fe(III)-[cytochrome c] + 2 H2O + 4 H(+)(out). Component of the cytochrome c oxidase, the last enzyme in the mitochondrial electron transport chain which drives oxidative phosphorylation. The respiratory chain contains 3 multisubunit complexes succinate dehydrogenase (complex II, CII), ubiquinol-cytochrome c oxidoreductase (cytochrome b-c1 complex, complex III, CIII) and cytochrome c oxidase (complex IV, CIV), that cooperate to transfer electrons derived from NADH and succinate to molecular oxygen, creating an electrochemical gradient over the inner membrane that drives transmembrane transport and the ATP synthase. Cytochrome c oxidase is the component of the respiratory chain that catalyzes the reduction of oxygen to water. Electrons originating from reduced cytochrome c in the intermembrane space (IMS) are transferred via the dinuclear copper A center (CU(A)) of subunit 2 and heme A of subunit 1 to the active site in subunit 1, a binuclear center (BNC) formed by heme A3 and copper B (CU(B)). The BNC reduces molecular oxygen to 2 water molecules using 4 electrons from cytochrome c in the IMS and 4 protons from the mitochondrial matrix. This is Cytochrome c oxidase subunit 2 (MT-CO2) from Vulpes macrotis (Kit fox).